Consider the following 149-residue polypeptide: Transcriptional repressor NrdR (149 aa).

A zinc finger spans residues 3–34 (CPFCFAVDTKVIDSRLVGEGSSVRRRRQCLVC). One can recognise an ATP-cone domain in the interval 49–139 (PRVVKSNDVR…VYRSFEDIKE (91 aa)).

This sequence belongs to the NrdR family. Requires Zn(2+) as cofactor.

Functionally, negatively regulates transcription of bacterial ribonucleotide reductase nrd genes and operons by binding to NrdR-boxes. In Escherichia coli O139:H28 (strain E24377A / ETEC), this protein is Transcriptional repressor NrdR.